Reading from the N-terminus, the 294-residue chain is Equatorin (294 aa).

The N-terminal stretch at M1–S14 is a signal peptide. Over L15–K181 the chain is Vesicular. The N-linked (GlcNAc...) asparagine glycan is linked to N76. Positions K107–R126 are disordered. N-linked (GlcNAc...) asparagine glycosylation occurs at N143. The helical transmembrane segment at I182–S202 threads the bilayer. Residues A203–R294 are Cytoplasmic-facing.

As to quaternary structure, interacts with SNAP25. Highly N- and O-glycosylated; contains sialic acid. In terms of tissue distribution, isoform 1 is highly expressed in testis. Isoform 2 is expressed at low levels in skin and blood.

It localises to the cytoplasmic vesicle. The protein resides in the secretory vesicle. Its subcellular location is the acrosome membrane. It is found in the acrosome inner membrane. The protein localises to the acrosome outer membrane. Acrosomal membrane-anchored protein involved in the process of fertilization and in acrosome biogenesis. The polypeptide is Equatorin (EQTN) (Homo sapiens (Human)).